Here is a 149-residue protein sequence, read N- to C-terminus: MEVFGMAIITLVGEKLARPGVEFIYYGPAEPCRTCKLAGVCVGNLEPGRRYKILRVRSMPSHSCPLHEGKVRVVEVVEPSIEVAIEPRLAIAGSVIKLSFVDCSDPEKRDLFRPEGLFEGDSVKIIEILGDVECNGRTYKLVKVMRKKE.

Belongs to the UPF0179 family.

The protein is UPF0179 protein TON_1048 of Thermococcus onnurineus (strain NA1).